A 556-amino-acid chain; its full sequence is Formate--tetrahydrofolate ligase (556 aa).

An ATP-binding site is contributed by 65–72 (TPAGEGKS).

It belongs to the formate--tetrahydrofolate ligase family.

It carries out the reaction (6S)-5,6,7,8-tetrahydrofolate + formate + ATP = (6R)-10-formyltetrahydrofolate + ADP + phosphate. The protein operates within one-carbon metabolism; tetrahydrofolate interconversion. In Streptococcus agalactiae serotype III (strain NEM316), this protein is Formate--tetrahydrofolate ligase.